A 392-amino-acid chain; its full sequence is Tryptophan synthase beta chain (392 aa).

Residue K86 is modified to N6-(pyridoxal phosphate)lysine.

The protein belongs to the TrpB family. Tetramer of two alpha and two beta chains. The cofactor is pyridoxal 5'-phosphate.

It carries out the reaction (1S,2R)-1-C-(indol-3-yl)glycerol 3-phosphate + L-serine = D-glyceraldehyde 3-phosphate + L-tryptophan + H2O. It functions in the pathway amino-acid biosynthesis; L-tryptophan biosynthesis; L-tryptophan from chorismate: step 5/5. In terms of biological role, the beta subunit is responsible for the synthesis of L-tryptophan from indole and L-serine. The chain is Tryptophan synthase beta chain from Methanocorpusculum labreanum (strain ATCC 43576 / DSM 4855 / Z).